The sequence spans 520 residues: GMP synthase [glutamine-hydrolyzing] (520 aa).

In terms of domain architecture, Glutamine amidotransferase type-1 spans 12–205 (KIIVLDYGSQ…AISICGARGD (194 aa)). Cysteine 89 acts as the Nucleophile in catalysis. Active-site residues include histidine 179 and glutamate 181. The GMPS ATP-PPase domain maps to 206–395 (WSMDNFIDME…LGMPEEIVWR (190 aa)). 233 to 239 (SGGVDSS) lines the ATP pocket.

As to quaternary structure, homodimer.

The enzyme catalyses XMP + L-glutamine + ATP + H2O = GMP + L-glutamate + AMP + diphosphate + 2 H(+). The protein operates within purine metabolism; GMP biosynthesis; GMP from XMP (L-Gln route): step 1/1. Its function is as follows. Catalyzes the synthesis of GMP from XMP. The protein is GMP synthase [glutamine-hydrolyzing] of Streptococcus pyogenes serotype M6 (strain ATCC BAA-946 / MGAS10394).